A 325-amino-acid polypeptide reads, in one-letter code: MTGTVYKSTGSWYTVKSEKGDFVECRMKGKFRIKGIKSTNPIAVGDIVDYELDETSDAVTGTIHTIHERKNYIVRKSVNLSKQIHIIASNIDQVFLLVTIDNPPTTTSFIDRFLVTAEAYGIEAILIFNKIDTLNEQTLDDQLYLQHIYTEIGYKCLRISSTENKGVDKLKEMMVGKVSMFSGHSGVGKSTLVNAMEPSLHLKTSVISEQSKQGQHTTTFAEMYDLSFDARIIDTPGIKGFGIVDMEPTEISGYFPEFFKLKDQCKFNNCLHKEEPHCAIKAALEKDEIAWSRYNSYLKILEGDEEHYRTDIYGEDRAASDETRK.

Positions 80–241 constitute a CP-type G domain; the sequence is LSKQIHIIAS…IIDTPGIKGF (162 aa). Residues 129-132 and 183-191 each bind GTP; these read NKID and GHSGVGKST. Zn(2+) contacts are provided by C265, C270, H272, and C278.

Belongs to the TRAFAC class YlqF/YawG GTPase family. RsgA subfamily. As to quaternary structure, monomer. Associates with 30S ribosomal subunit, binds 16S rRNA. It depends on Zn(2+) as a cofactor.

The protein localises to the cytoplasm. One of several proteins that assist in the late maturation steps of the functional core of the 30S ribosomal subunit. Helps release RbfA from mature subunits. May play a role in the assembly of ribosomal proteins into the subunit. Circularly permuted GTPase that catalyzes slow GTP hydrolysis, GTPase activity is stimulated by the 30S ribosomal subunit. This chain is Small ribosomal subunit biogenesis GTPase RsgA, found in Flavobacterium johnsoniae (strain ATCC 17061 / DSM 2064 / JCM 8514 / BCRC 14874 / CCUG 350202 / NBRC 14942 / NCIMB 11054 / UW101) (Cytophaga johnsonae).